A 485-amino-acid chain; its full sequence is NADH-quinone oxidoreductase subunit N (485 aa).

Helical transmembrane passes span 8–28, 35–55, 71–91, 105–125, 127–147, 159–179, 203–223, 235–255, 271–291, 297–317, 326–346, 373–393, 408–430, and 455–475; these read LIAL…MLSI, FLNA…LWFV, GFAM…CTFA, FYLL…ANHL, ALFL…GYAF, YTIL…LVYA, LLAG…LVPF, PAPV…GVVM, IVLG…ALSQ, LLGY…IALQ, VGVY…VVSL, AAVM…LGFI, WWLV…RVAV, and IVVL…QPLI.

This sequence belongs to the complex I subunit 2 family. As to quaternary structure, NDH-1 is composed of 13 different subunits. Subunits NuoA, H, J, K, L, M, N constitute the membrane sector of the complex.

Its subcellular location is the cell inner membrane. The enzyme catalyses a quinone + NADH + 5 H(+)(in) = a quinol + NAD(+) + 4 H(+)(out). In terms of biological role, NDH-1 shuttles electrons from NADH, via FMN and iron-sulfur (Fe-S) centers, to quinones in the respiratory chain. The immediate electron acceptor for the enzyme in this species is believed to be ubiquinone. Couples the redox reaction to proton translocation (for every two electrons transferred, four hydrogen ions are translocated across the cytoplasmic membrane), and thus conserves the redox energy in a proton gradient. The polypeptide is NADH-quinone oxidoreductase subunit N (Citrobacter koseri (strain ATCC BAA-895 / CDC 4225-83 / SGSC4696)).